The primary structure comprises 161 residues: Allophycocyanin alpha-B chain (161 aa).

Position 71 is an N4-methylasparagine (Asn71). Residue Cys81 coordinates (2R,3E)-phycocyanobilin.

The protein belongs to the phycobiliprotein family. Post-translationally, contains one covalently linked bilin chromophore.

Its subcellular location is the plastid. The protein localises to the chloroplast thylakoid membrane. Its function is as follows. Allophycocyanin is a photosynthetic bile pigment-protein complex with maximum absorption at approximately 650 nanometers. The protein is Allophycocyanin alpha-B chain (apcD) of Pyropia yezoensis (Susabi-nori).